A 683-amino-acid polypeptide reads, in one-letter code: Cysteine-rich receptor-like protein kinase 28 (683 aa).

Positions methionine 1–alanine 24 are cleaved as a signal peptide. The Extracellular portion of the chain corresponds to glutamine 25 to lysine 288. 2 Gnk2-homologous domains span residues proline 32–isoleucine 136 and threonine 142–phenylalanine 251. 4 N-linked (GlcNAc...) asparagine glycosylation sites follow: asparagine 43, asparagine 47, asparagine 73, and asparagine 153. The disordered stretch occupies residues proline 263 to glycine 283. A helical membrane pass occupies residues valine 289 to leucine 309. Over leucine 310–arginine 683 the chain is Cytoplasmic. One can recognise a Protein kinase domain in the interval phenylalanine 361–threonine 641. ATP is bound by residues leucine 367–valine 375 and lysine 389. Tyrosine 434 bears the Phosphotyrosine mark. Aspartate 486 serves as the catalytic Proton acceptor. Residue serine 490 is modified to Phosphoserine. Position 528 is a phosphothreonine (threonine 528). Tyrosine 536 bears the Phosphotyrosine mark.

Belongs to the protein kinase superfamily. Ser/Thr protein kinase family. CRK subfamily.

The protein resides in the membrane. It catalyses the reaction L-seryl-[protein] + ATP = O-phospho-L-seryl-[protein] + ADP + H(+). The catalysed reaction is L-threonyl-[protein] + ATP = O-phospho-L-threonyl-[protein] + ADP + H(+). The protein is Cysteine-rich receptor-like protein kinase 28 (CRK28) of Arabidopsis thaliana (Mouse-ear cress).